The following is a 698-amino-acid chain: Gametogenetin-binding protein 2 (698 aa).

Positions 555–575 (CMADPGNRETSGNTTHTEFHR) are disordered.

It localises to the cytoplasm. May be involved in spermatogenesis. This Gallus gallus (Chicken) protein is Gametogenetin-binding protein 2 (GGNBP2).